We begin with the raw amino-acid sequence, 158 residues long: Protein OPG060 (158 aa).

This sequence belongs to the orthopoxvirus OPG058 family.

The protein is Protein OPG060 (OPG060) of Homo sapiens (Human).